A 156-amino-acid polypeptide reads, in one-letter code: Lipoprotein signal peptidase (156 aa).

A run of 3 helical transmembrane segments spans residues 5 to 25 (FFVV…TKQW), 63 to 83 (IEWQ…AIIA), and 90 to 110 (SNPY…GNLI). Catalysis depends on residues aspartate 120 and aspartate 138. A helical membrane pass occupies residues 133–153 (AFNVADMGICVGAFFVCLAVY).

It belongs to the peptidase A8 family.

Its subcellular location is the cell inner membrane. It catalyses the reaction Release of signal peptides from bacterial membrane prolipoproteins. Hydrolyzes -Xaa-Yaa-Zaa-|-(S,diacylglyceryl)Cys-, in which Xaa is hydrophobic (preferably Leu), and Yaa (Ala or Ser) and Zaa (Gly or Ala) have small, neutral side chains.. Its pathway is protein modification; lipoprotein biosynthesis (signal peptide cleavage). This protein specifically catalyzes the removal of signal peptides from prolipoproteins. The polypeptide is Lipoprotein signal peptidase (Oleidesulfovibrio alaskensis (strain ATCC BAA-1058 / DSM 17464 / G20) (Desulfovibrio alaskensis)).